The sequence spans 330 residues: GTPase Obg (330 aa).

The Obg domain occupies 1 to 159; the sequence is MHFIDEVKIY…MWIHLSLKLL (159 aa). The OBG-type G domain maps to 160–327; it reads SDVGLVGLPN…IVKLALETIK (168 aa). Residues 166-173, 191-195, 212-215, 279-282, and 308-310 each bind GTP; these read GLPNAGKS, FTTLV, DIPG, NKCD, and STC. Positions 173 and 193 each coordinate Mg(2+).

The protein belongs to the TRAFAC class OBG-HflX-like GTPase superfamily. OBG GTPase family. As to quaternary structure, monomer. Mg(2+) serves as cofactor.

The protein resides in the cytoplasm. In terms of biological role, an essential GTPase which binds GTP, GDP and possibly (p)ppGpp with moderate affinity, with high nucleotide exchange rates and a fairly low GTP hydrolysis rate. Plays a role in control of the cell cycle, stress response, ribosome biogenesis and in those bacteria that undergo differentiation, in morphogenesis control. This is GTPase Obg from Rickettsia conorii (strain ATCC VR-613 / Malish 7).